The following is a 1442-amino-acid chain: Trafficking protein particle complex subunit 10 (1442 aa).

The segment covering 1-23 (MSNVSPNSMNLNGSTSSTASVND) has biased composition (polar residues). Disordered stretches follow at residues 1-86 (MSNV…SSSS), 251-277 (TSSGNNKDKDNDNGGGSSGTGLSTSTK), 535-564 (GSSSSNTPSSTSATTAANGKNTPMPSNSGI), 1208-1238 (LSSSTSPSSATDSSNSNGNNNNNNNNNNHSK), 1316-1335 (QQQQKESNNDNGNEKQQKQQ), and 1422-1442 (LQDNNNNNNNSINSQTSTNKT). Over residues 39–86 (SSSSASSISNSNSSSSNNLKPSTQPLSSSSTLNTPTQFSLQHSSSSSS) the composition is skewed to low complexity. Residues 535 to 553 (GSSSSNTPSSTSATTAANG) are compositionally biased toward low complexity. The segment covering 554–564 (KNTPMPSNSGI) has biased composition (polar residues). Residues 1208 to 1236 (LSSSTSPSSATDSSNSNGNNNNNNNNNNH) show a composition bias toward low complexity. Residues 1425-1442 (NNNNNNNSINSQTSTNKT) are compositionally biased toward low complexity.

This sequence belongs to the TMEM1 family. In terms of assembly, part of the multisubunit TRAPP (transport protein particle) complex.

The protein resides in the golgi apparatus. It is found in the cis-Golgi network. In terms of biological role, may play a role in vesicular transport from endoplasmic reticulum to Golgi. The sequence is that of Trafficking protein particle complex subunit 10 (trapcc10-1) from Dictyostelium discoideum (Social amoeba).